We begin with the raw amino-acid sequence, 199 residues long: 7-methyl-GTP pyrophosphatase (199 aa).

The active-site Proton acceptor is the Asp-76.

It belongs to the Maf family. YceF subfamily. The cofactor is a divalent metal cation.

The protein localises to the cytoplasm. It catalyses the reaction N(7)-methyl-GTP + H2O = N(7)-methyl-GMP + diphosphate + H(+). Its function is as follows. Nucleoside triphosphate pyrophosphatase that hydrolyzes 7-methyl-GTP (m(7)GTP). May have a dual role in cell division arrest and in preventing the incorporation of modified nucleotides into cellular nucleic acids. In Hahella chejuensis (strain KCTC 2396), this protein is 7-methyl-GTP pyrophosphatase.